The chain runs to 500 residues: L-arabinose isomerase (500 aa).

Mn(2+)-binding residues include E306, E333, H350, and H450.

It belongs to the arabinose isomerase family. In terms of assembly, homohexamer. Requires Mn(2+) as cofactor.

The catalysed reaction is beta-L-arabinopyranose = L-ribulose. The protein operates within carbohydrate degradation; L-arabinose degradation via L-ribulose; D-xylulose 5-phosphate from L-arabinose (bacterial route): step 1/3. Functionally, catalyzes the conversion of L-arabinose to L-ribulose. This chain is L-arabinose isomerase, found in Escherichia coli O139:H28 (strain E24377A / ETEC).